Reading from the N-terminus, the 550-residue chain is MFCVQCEQTIRTPAGNGCSYAQGMCGKTAETSDLQDLLVAVLQGLSAWALQARELGIIDSQIDSFAPRAFFSTLTNVNFDSDRIVEYAKDAILLRHSLAVRCRLLDSTITVDHPLAELQLVADDIPSLLQQSQQFALNNDKADVGDDIHGLRMLCLYGLKGAAAYMEHAHVLGQSDEQIYAEYHAYMAWLGTQPRDVDTLLNNAMGIGKMNFNVMAILDQGETQAYGDPQPTSVNVRPVAGKAILISGHDLKDLHMLLEQTQGTGINIYTHGEMLPAHGYPELKRYPHLVGNYGSGWQNQQTEFAKFPGPILMTSNCIIDPNVGNYGDRIWTRSIVGWPGVNHLDGENFAPVIEQALGMAGFPYSELEHLITVGFGRQTLLNAADTVIDLVASKKLRHVFLVGGCDGSRTERSYFTDFARSVPQDCIIMTLACGKYRFNKLDFGTLEGLPRLLDVGQCNDAYAAIMLAVKLSEKLGCTVNDLPLSLVLSWFEQKAIVILLTLLSLGVKNIYTGPTAPGFLTDNLMAILYEKFGMQPITTVEQDMQAILGH.

[2Fe-2S] cluster contacts are provided by cysteine 3, cysteine 6, cysteine 18, and cysteine 25. Hybrid [4Fe-2O-2S] cluster contacts are provided by histidine 249, glutamate 273, cysteine 317, cysteine 405, cysteine 433, cysteine 458, glutamate 492, and lysine 494. Cysteine 405 bears the Cysteine persulfide mark.

It belongs to the HCP family. The cofactor is [2Fe-2S] cluster. Hybrid [4Fe-2O-2S] cluster serves as cofactor.

The protein localises to the cytoplasm. It catalyses the reaction A + NH4(+) + H2O = hydroxylamine + AH2 + H(+). In terms of biological role, catalyzes the reduction of hydroxylamine to form NH(3) and H(2)O. The chain is Hydroxylamine reductase from Yersinia pseudotuberculosis serotype IB (strain PB1/+).